A 463-amino-acid polypeptide reads, in one-letter code: Asparagine--tRNA ligase (463 aa).

It belongs to the class-II aminoacyl-tRNA synthetase family. In terms of assembly, homodimer.

It is found in the cytoplasm. The enzyme catalyses tRNA(Asn) + L-asparagine + ATP = L-asparaginyl-tRNA(Asn) + AMP + diphosphate + H(+). The polypeptide is Asparagine--tRNA ligase (Acholeplasma laidlawii (strain PG-8A)).